Here is a 372-residue protein sequence, read N- to C-terminus: Protein phosphatase Mn(2+)-dependent 1K (372 aa).

The N-terminal 29 residues, 1 to 29, are a transit peptide targeting the mitochondrion; it reads MLSTAFITLVRSGRNQVKKRVLLSSILLQ. The segment at 46–61 is critical for association with the BCKDH complex; sequence RCSRFDPDGSGQPATW. The region spanning 94 to 346 is the PPM-type phosphatase domain; sequence NVGCASLIGK…DNSTAVVVPF (253 aa). Asp-127 and Gly-128 together coordinate Mn(2+). At Ser-248 the chain carries Phosphoserine. Asp-298 and Asp-337 together coordinate Mn(2+).

The protein belongs to the PP2C family. In terms of assembly, interacts with E1 and E2 components of the branched-chain alpha-ketoacid dehydrogenase (BCKDH) complex. Interacts with both BCKDHA and BCKDHB chains of the E1 subunit. Interacts with the 24-meric DBT/E2 core of the BCKD complex with a 1:1 stoichiometry; the N-terminal region (residues 49-61) of PPM1K and C-terminal linker of the lipoyl domain of DBT/E2 (residues 145-160) are critical for this interaction whereas the lipoyl prosthetic group is dispensable. Competes with BCKDK for binding to DBT/E2; this interaction is modulated by branched-chain alpha-keto acids (BCKAs). At steady state, BCKDH holoenzyme preferentially binds BCKDK and BCKDHA/E1 is phosphorylated. In response to high levels of BCKAs, BCKDK is replaced by PPM1K leading to BCKDHA/E1 dephosphorylation. Mn(2+) is required as a cofactor.

It is found in the mitochondrion matrix. It catalyses the reaction O-phospho-L-seryl-[3-methyl-2-oxobutanoate dehydrogenase] + H2O = L-seryl-[3-methyl-2-oxobutanoate dehydrogenase] + phosphate. The enzyme catalyses O-phospho-L-seryl-[protein] + H2O = L-seryl-[protein] + phosphate. Its pathway is protein modification. Serine/threonine-protein phosphatase component of macronutrients metabolism. Together with BCKDK serves as a metabolic regulatory node that coordinates branched-chain amino acids (BCAAs) and protein synthesis with glucose and lipid metabolism via two distinct phosphoprotein targets: BCKDHA/E1a subunit of the branched-chain alpha-ketoacid dehydrogenase (BCKDH) complex and ACLY, a lipogenic enzyme of Krebs cycle. At high levels of branched-chain ketoacids (BCKAs), dephosphorylates and activates mitochondrial BCKDH complex, a multisubunit complex consisting of three components, heterotetrameric E1 composed of BCKDHA and BCKDHB chains, 24-meric E2 core composed of DBT and homodimeric E3 composed of DLD, each involved in different steps of BCAA catabolism. Tightly associates with the E2 subunit of BCKDH complex and dephosphorylates Ser-333 of BCKDHA chain of the E1 subunit likely through on-off binding to individual E2 subunits of the 24-meric E2 core to increase the efficiency of the dephosphorylation reaction. Appears to dephosphorylate and inactivate cytosolic ACLY in response to changes of cellular carbohydrate abundance. Overnutrition and in particular high-fructose diet, activates MLXIPL/ChREBP leading to increased BCKDK to PPM1K ratio, phosphorylation of ACLY on Ser-454 and activation of its enzymatic activity that ultimately results in the generation of acetyl-CoA and malonyl-CoA immediate substrates of de novo lipogenesis. Recognizes phosphosites having SxS or RxxS motifs and strictly depends on Mn(2+) ions for the phosphatase activity. Regulates Ca(2+)-induced opening of mitochondrial transition pore and apoptotic cell death. In Rattus norvegicus (Rat), this protein is Protein phosphatase Mn(2+)-dependent 1K (Ppm1k).